A 455-amino-acid chain; its full sequence is GTPase Der (455 aa).

2 EngA-type G domains span residues 4 to 169 (PVVA…PPKD) and 178 to 353 (IQMA…EQHR). GTP-binding positions include 10–17 (GRPNVGKS), 57–61 (DTGGL), 120–123 (NKCE), 184–191 (GRPNVGKS), 231–235 (DTAGI), and 296–299 (NKWD). A KH-like domain is found at 354–439 (RRVSTSVVNE…PLRLFWRGKQ (86 aa)).

Belongs to the TRAFAC class TrmE-Era-EngA-EngB-Septin-like GTPase superfamily. EngA (Der) GTPase family. In terms of assembly, associates with the 50S ribosomal subunit.

In terms of biological role, GTPase that plays an essential role in the late steps of ribosome biogenesis. This chain is GTPase Der, found in Synechococcus sp. (strain CC9605).